The primary structure comprises 416 residues: LysM domain-containing GPI-anchored protein 1 (416 aa).

An N-terminal signal peptide occupies residues 1–27 (MKIPEKPIFLIFVSLILASSLTFTATA). Cystine bridges form between C34–C100, C40–C163, C98–C161, and C100–C163. Residue N37 is glycosylated (N-linked (GlcNAc...) asparagine). Positions 110–157 (THYKTRPSDNLGSIADSVYGGLVSAEQIQEANSVNDPSLLDVGTSLVI) constitute a LysM 1 domain. A glycan (N-linked (GlcNAc...) asparagine) is linked at N165. A LysM 2 domain is found at 176-219 (LSYVVKEIDTLVGIARRYSTTITDLMNVNAMGAPDVSSGDILAV). 2 disulfide bridges follow: C224-C256 and C251-C279. N241 carries N-linked (GlcNAc...) asparagine glycosylation. Residues N288, N299, and N310 are each glycosylated (N-linked (GlcNAc...) asparagine). Positions 356 to 376 (DGPGSIASSPRSSMLPGGGIL) are disordered. The GPI-anchor amidated alanine moiety is linked to residue A391. The propeptide at 392 to 416 (SASSVSYFFITFLISIASFSLALSS) is removed in mature form.

As to quaternary structure, interacts with peptidoglycans.

It localises to the cell membrane. The protein localises to the secreted. In terms of biological role, required as a cell surface receptor for peptidoglycan (PGN) elicitor signaling leading to innate immunity. Plays an essential role in detecting PGNs and restricting bacterial growth (of Pseudomonas syringae pv. tomato DC3000 for example). The chain is LysM domain-containing GPI-anchored protein 1 (LYM1) from Arabidopsis thaliana (Mouse-ear cress).